The following is a 122-amino-acid chain: Flowering-promoting factor 1-like protein 3 (122 aa).

The segment at 16–36 (ENPGSEESSSAGDGGGGGRRK) is disordered.

Belongs to the FPF1 family.

The chain is Flowering-promoting factor 1-like protein 3 from Oryza sativa subsp. japonica (Rice).